Here is a 146-residue protein sequence, read N- to C-terminus: Hemoglobin subunit beta-2 (146 aa).

Residues 2-146 (EWTDFERATI…VVSSLGRQYH (145 aa)) form the Globin domain. 2 residues coordinate heme b: H63 and H92.

The protein belongs to the globin family. In terms of assembly, hb2 is a heterotetramer of two alpha chains and two beta-2 chains. As to expression, red blood cells.

Functionally, involved in oxygen transport from gills to the various peripheral tissues. The sequence is that of Hemoglobin subunit beta-2 (hbb2) from Pseudaphritis urvillii (Congolli).